The sequence spans 439 residues: Xylose isomerase (439 aa).

Residues histidine 101 and aspartate 104 contribute to the active site. Mg(2+) contacts are provided by glutamate 232, glutamate 268, histidine 271, aspartate 296, aspartate 307, aspartate 309, and aspartate 339.

Belongs to the xylose isomerase family. As to quaternary structure, homotetramer. Mg(2+) serves as cofactor.

It is found in the cytoplasm. It carries out the reaction alpha-D-xylose = alpha-D-xylulofuranose. The sequence is that of Xylose isomerase from Yersinia pestis bv. Antiqua (strain Angola).